Here is a 140-residue protein sequence, read N- to C-terminus: MSTLHVDIVSAEQAIHSGEAKMLVAPAREGDIGITPRHAPLLTKLRPGEVRVQDENGEERFFYVSGGIIEVQPHKVTVLADTAARARDLDEAAAQEAKRRAEEALANRKAGEDYSHVQAELAEAMAQLQTLERLRRRAKR.

Belongs to the ATPase epsilon chain family. F-type ATPases have 2 components, CF(1) - the catalytic core - and CF(0) - the membrane proton channel. CF(1) has five subunits: alpha(3), beta(3), gamma(1), delta(1), epsilon(1). CF(0) has three main subunits: a, b and c.

It localises to the cell inner membrane. Functionally, produces ATP from ADP in the presence of a proton gradient across the membrane. The protein is ATP synthase epsilon chain of Alkalilimnicola ehrlichii (strain ATCC BAA-1101 / DSM 17681 / MLHE-1).